The sequence spans 237 residues: Protein GrpE (237 aa).

Disordered regions lie at residues 24–56 (LILEDSEAEAGTSSGETAAEPSPDPGEALKQLQ) and 204–237 (SAGSPSSEPSPPAQATIEAGPENTPASPQNPQPS).

It belongs to the GrpE family. As to quaternary structure, homodimer.

The protein localises to the cytoplasm. Its function is as follows. Participates actively in the response to hyperosmotic and heat shock by preventing the aggregation of stress-denatured proteins, in association with DnaK and GrpE. It is the nucleotide exchange factor for DnaK and may function as a thermosensor. Unfolded proteins bind initially to DnaJ; upon interaction with the DnaJ-bound protein, DnaK hydrolyzes its bound ATP, resulting in the formation of a stable complex. GrpE releases ADP from DnaK; ATP binding to DnaK triggers the release of the substrate protein, thus completing the reaction cycle. Several rounds of ATP-dependent interactions between DnaJ, DnaK and GrpE are required for fully efficient folding. The sequence is that of Protein GrpE from Synechococcus sp. (strain JA-2-3B'a(2-13)) (Cyanobacteria bacterium Yellowstone B-Prime).